A 393-amino-acid polypeptide reads, in one-letter code: Formate-dependent phosphoribosylglycinamide formyltransferase (393 aa).

N(1)-(5-phospho-beta-D-ribosyl)glycinamide-binding positions include 22 to 23 (EL) and E82. Residues R114, K155, 160–165 (SSGKGQ), 195–198 (EGLV), and E203 contribute to the ATP site. The 190-residue stretch at 119 to 308 (LLAAETLQLP…EFALHVRAFL (190 aa)) folds into the ATP-grasp domain. Residues E267 and E279 each coordinate Mg(2+). N(1)-(5-phospho-beta-D-ribosyl)glycinamide contacts are provided by residues D286, K355, and 362–363 (RR).

The protein belongs to the PurK/PurT family. As to quaternary structure, homodimer.

It carries out the reaction N(1)-(5-phospho-beta-D-ribosyl)glycinamide + formate + ATP = N(2)-formyl-N(1)-(5-phospho-beta-D-ribosyl)glycinamide + ADP + phosphate + H(+). The protein operates within purine metabolism; IMP biosynthesis via de novo pathway; N(2)-formyl-N(1)-(5-phospho-D-ribosyl)glycinamide from N(1)-(5-phospho-D-ribosyl)glycinamide (formate route): step 1/1. Functionally, involved in the de novo purine biosynthesis. Catalyzes the transfer of formate to 5-phospho-ribosyl-glycinamide (GAR), producing 5-phospho-ribosyl-N-formylglycinamide (FGAR). Formate is provided by PurU via hydrolysis of 10-formyl-tetrahydrofolate. The polypeptide is Formate-dependent phosphoribosylglycinamide formyltransferase (Yersinia enterocolitica serotype O:8 / biotype 1B (strain NCTC 13174 / 8081)).